We begin with the raw amino-acid sequence, 424 residues long: UDP-N-acetylglucosamine 1-carboxyvinyltransferase (424 aa).

A phosphoenolpyruvate-binding site is contributed by 22 to 23 (KN). Arginine 98 is a UDP-N-acetyl-alpha-D-glucosamine binding site. The Proton donor role is filled by cysteine 122. Cysteine 122 is subject to 2-(S-cysteinyl)pyruvic acid O-phosphothioketal. UDP-N-acetyl-alpha-D-glucosamine contacts are provided by residues 127–131 (RPVDQ), aspartate 312, and isoleucine 334.

This sequence belongs to the EPSP synthase family. MurA subfamily.

Its subcellular location is the cytoplasm. It catalyses the reaction phosphoenolpyruvate + UDP-N-acetyl-alpha-D-glucosamine = UDP-N-acetyl-3-O-(1-carboxyvinyl)-alpha-D-glucosamine + phosphate. The protein operates within cell wall biogenesis; peptidoglycan biosynthesis. In terms of biological role, cell wall formation. Adds enolpyruvyl to UDP-N-acetylglucosamine. This is UDP-N-acetylglucosamine 1-carboxyvinyltransferase from Xanthomonas axonopodis pv. citri (strain 306).